The primary structure comprises 256 residues: Type III pantothenate kinase (256 aa).

6–13 is a binding site for ATP; sequence DAGNSRIK. Residues Tyr90 and 97–100 contribute to the substrate site; that span reads GSDR. The Proton acceptor role is filled by Asp99. Thr123 lines the ATP pocket. Thr187 is a binding site for substrate.

The protein belongs to the type III pantothenate kinase family. In terms of assembly, homodimer. Requires NH4(+) as cofactor. K(+) serves as cofactor.

The protein resides in the cytoplasm. It carries out the reaction (R)-pantothenate + ATP = (R)-4'-phosphopantothenate + ADP + H(+). The protein operates within cofactor biosynthesis; coenzyme A biosynthesis; CoA from (R)-pantothenate: step 1/5. Its function is as follows. Catalyzes the phosphorylation of pantothenate (Pan), the first step in CoA biosynthesis. The chain is Type III pantothenate kinase from Burkholderia mallei (strain ATCC 23344).